The chain runs to 174 residues: MVYKIKKYGEDVLKQIAKEVELSEINDEFRQFLDDMVETMYETDGVGLAAPQIGVSKRIFVCDDGNGVLRKVINPIIVPLTEETQEFEEGCLSVPGIYKKVERPKRVLLKYLNEYGKEVEEIAENFLAVVVQHENDHLDGILFIEKISPMAKRLIAKKLANIKKETKRIKEENE.

Fe cation is bound by residues C91 and H133. The active site involves E134. H137 contacts Fe cation.

Belongs to the polypeptide deformylase family. Requires Fe(2+) as cofactor.

The catalysed reaction is N-terminal N-formyl-L-methionyl-[peptide] + H2O = N-terminal L-methionyl-[peptide] + formate. Functionally, removes the formyl group from the N-terminal Met of newly synthesized proteins. Requires at least a dipeptide for an efficient rate of reaction. N-terminal L-methionine is a prerequisite for activity but the enzyme has broad specificity at other positions. The polypeptide is Peptide deformylase (Fusobacterium nucleatum subsp. nucleatum (strain ATCC 25586 / DSM 15643 / BCRC 10681 / CIP 101130 / JCM 8532 / KCTC 2640 / LMG 13131 / VPI 4355)).